The primary structure comprises 260 residues: Cytochrome c oxidase subunit 2 (260 aa).

At 1-43 (MILRLLECRFFTIALCDAAEPWQLGFQDAATPMMQGIIDLHHD) the chain is on the mitochondrial intermembrane side. The chain crosses the membrane as a helical span at residues 44-64 (IFFFLILILVFVLWMLVRALW). At 65–84 (HFNEQTNPIPQRIVHGTTIE) the chain is on the mitochondrial matrix side. A helical membrane pass occupies residues 85–105 (IIWTIFPSVILLFIAIPSFAL). Over 106–260 (LYSMDGVLVD…VSNQLILQTN (155 aa)) the chain is Mitochondrial intermembrane. 6 residues coordinate Cu cation: histidine 189, cysteine 224, glutamate 226, cysteine 228, histidine 232, and methionine 235. Position 226 (glutamate 226) interacts with Mg(2+).

Belongs to the cytochrome c oxidase subunit 2 family. As to quaternary structure, component of the cytochrome c oxidase (complex IV, CIV), a multisubunit enzyme composed of a catalytic core of 3 subunits and several supernumerary subunits. The complex exists as a monomer or a dimer and forms supercomplexes (SCs) in the inner mitochondrial membrane with ubiquinol-cytochrome c oxidoreductase (cytochrome b-c1 complex, complex III, CIII). The cofactor is Cu cation.

The protein resides in the mitochondrion inner membrane. The catalysed reaction is 4 Fe(II)-[cytochrome c] + O2 + 8 H(+)(in) = 4 Fe(III)-[cytochrome c] + 2 H2O + 4 H(+)(out). Functionally, component of the cytochrome c oxidase, the last enzyme in the mitochondrial electron transport chain which drives oxidative phosphorylation. The respiratory chain contains 3 multisubunit complexes succinate dehydrogenase (complex II, CII), ubiquinol-cytochrome c oxidoreductase (cytochrome b-c1 complex, complex III, CIII) and cytochrome c oxidase (complex IV, CIV), that cooperate to transfer electrons derived from NADH and succinate to molecular oxygen, creating an electrochemical gradient over the inner membrane that drives transmembrane transport and the ATP synthase. Cytochrome c oxidase is the component of the respiratory chain that catalyzes the reduction of oxygen to water. Electrons originating from reduced cytochrome c in the intermembrane space (IMS) are transferred via the dinuclear copper A center (CU(A)) of subunit 2 and heme A of subunit 1 to the active site in subunit 1, a binuclear center (BNC) formed by heme A3 and copper B (CU(B)). The BNC reduces molecular oxygen to 2 water molecules using 4 electrons from cytochrome c in the IMS and 4 protons from the mitochondrial matrix. The protein is Cytochrome c oxidase subunit 2 (COX2) of Zea mays (Maize).